A 164-amino-acid chain; its full sequence is UPF0178 protein RPB_3201 (164 aa).

Belongs to the UPF0178 family.

In Rhodopseudomonas palustris (strain HaA2), this protein is UPF0178 protein RPB_3201.